The chain runs to 572 residues: EF-hand calcium-binding domain-containing protein 12 (572 aa).

Disordered regions lie at residues 62 to 85 (VPRK…KPIP) and 146 to 169 (EQSA…PRLS). Residues 196 to 231 (SRKIKILEIFHKVGQGENQRITREEFIAAVKAVGVP) form the EF-hand domain. Glu212 serves as a coordination point for Ca(2+).

This chain is EF-hand calcium-binding domain-containing protein 12 (EFCAB12), found in Homo sapiens (Human).